The following is a 155-amino-acid chain: Fibroblast growth factor 2 (155 aa).

Positions 1 to 9 (MAAGSITTL) are excised as a propeptide. The disordered stretch occupies residues 1-20 (MAAGSITTLPALPEDGGSGA). Position 36 (Asn-36) interacts with heparin. The short motif at 46–48 (DGR) is the Cell attachment site; atypical element. Tyr-82 bears the Phosphotyrosine; by TEC mark. Positions 88–90 (DGR) match the Cell attachment site; atypical motif. A Glycyl lysine isopeptide (Lys-Gly) (interchain with G-Cter in SUMO1) cross-link involves residue Lys-95. The interval 128–144 (KRTGQYKLGPKTGPGQK) is heparin-binding.

This sequence belongs to the heparin-binding growth factors family. As to quaternary structure, monomer. Homodimer. Interacts with FGFR1, FGFR2, FGFR3 and FGFR4. Affinity between fibroblast growth factors (FGFs) and their receptors is increased by heparan sulfate glycosaminoglycans that function as coreceptors. Interacts with CSPG4, FGFBP1 and TEC. Found in a complex with FGFBP1, FGF1 and FGF2. Interacts with FGFBP3. Interacts with integrin ITGAV:ITGB3; the interaction is required for FGF2 signaling. Interacts with SNORC (via the extracellular domain). Interacts with glypican GPC3. In terms of processing, phosphorylation at Tyr-82 regulates FGF2 unconventional secretion.

It localises to the secreted. Its subcellular location is the nucleus. In terms of biological role, acts as a ligand for FGFR1, FGFR2, FGFR3 and FGFR4. Also acts as an integrin ligand which is required for FGF2 signaling. Binds to integrin ITGAV:ITGB3. Plays an important role in the regulation of cell survival, cell division, cell differentiation and cell migration. Functions as a potent mitogen in vitro. Can induce angiogenesis. Mediates phosphorylation of ERK1/2 and thereby promotes retinal lens fiber differentiation. The protein is Fibroblast growth factor 2 (FGF2) of Bos taurus (Bovine).